Here is a 313-residue protein sequence, read N- to C-terminus: MPRVFTGLPANYAAPTLALSLLLPLLLVVWTQLPVSARPSTGPDYLRRGWLRLLAEGEGCAPCRPEECAAPRGCLAGRVRDACGCCWECANLEGQLCDLDPSANFYGRCGEQLECRLDAGGDLSRGEVPEPLCVCRSQRPLCGSDGRTYAQICRLQEAARARLDANLTVVHPGPCESEPQILSQPHNIWNVTGQDVIFGCEVFAYPMASIEWRKDGLDIQLPGDDPHISVQFRGGPQKFEVTGWLQIQALRPSDEGTYRCLARNALGQAEASATLTVLTPEQLNATGFSQLQSRSLFPEEEEEAESEELGDYY.

The signal sequence occupies residues 1–37; the sequence is MPRVFTGLPANYAAPTLALSLLLPLLLVVWTQLPVSA. One can recognise an IGFBP N-terminal domain in the interval 56-136; the sequence is EGEGCAPCRP…EVPEPLCVCR (81 aa). Intrachain disulfides connect Cys60–Cys83, Cys63–Cys85, Cys68–Cys86, Cys74–Cys89, Cys97–Cys115, Cys109–Cys133, and Cys142–Cys175. The Kazal-like domain occupies 127–177; the sequence is EVPEPLCVCRSQRPLCGSDGRTYAQICRLQEAARARLDANLTVVHPGPCES. 2 N-linked (GlcNAc...) asparagine glycosylation sites follow: Asn166 and Asn190. The Ig-like C2-type domain maps to 179–276; it reads PQILSQPHNI…GQAEASATLT (98 aa). Cys200 and Cys260 are disulfide-bonded. A glycan (N-linked (GlcNAc...) asparagine) is linked at Asn284. The segment at 290 to 313 is disordered; sequence QLQSRSLFPEEEEEAESEELGDYY. Residues 298-313 are compositionally biased toward acidic residues; sequence PEEEEEAESEELGDYY.

In terms of tissue distribution, highly expressed in the spleen. Moderately expressed in the skin, lung and urinary bladder. Weakly expressed in the brain, tongue, esophagus, stomach, large intestine, liver and bone. Expressed in osteoblastic cells during bone regeneration. Expressed in secretory osteoblasts in the tooth.

The protein localises to the secreted. It is found in the extracellular space. Its subcellular location is the extracellular matrix. Involved in the proliferation of osteoblasts during bone formation and bone regeneration. Promotes matrix assembly. The chain is Kazal-type serine protease inhibitor domain-containing protein 1 (Kazald1) from Mus musculus (Mouse).